The sequence spans 431 residues: IMP-specific 5'-nucleotidase 1 (431 aa).

Position 117 (lysine 117) interacts with ATP. The active-site Nucleophile is the aspartate 157. Residues aspartate 157, aspartate 159, aspartate 165, threonine 193, aspartate 349, and lysine 357 each contribute to the IMP site. Mg(2+)-binding residues include aspartate 157 and aspartate 159. Aspartate 159 functions as the Proton donor in the catalytic mechanism. Aspartate 388 lines the Mg(2+) pocket.

This sequence belongs to the ISN1 family. In terms of assembly, homotetramer. The cofactor is Mg(2+).

The enzyme catalyses IMP + H2O = inosine + phosphate. Its activity is regulated as follows. Allosterically activated by ATP. ATP binding is a prerequisite to magnesium and substrate binding. ATP binds to 2 of the subunits in the homotetramer inducing a closure of these 2 subunits and the release of the C-terminal loop, thereby activating the enzyme. Its function is as follows. IMP-specific 5'-nucleotidase involved in IMP (inositol monophosphate) degradation. This Neurospora crassa (strain ATCC 24698 / 74-OR23-1A / CBS 708.71 / DSM 1257 / FGSC 987) protein is IMP-specific 5'-nucleotidase 1 (isn-1).